We begin with the raw amino-acid sequence, 437 residues long: Ribosomal protein uS12 methylthiotransferase RimO (437 aa).

In terms of domain architecture, MTTase N-terminal spans 3–118 (KKFYITTLGC…AGKILREKFP (116 aa)). Positions 12, 48, 81, 157, 161, and 164 each coordinate [4Fe-4S] cluster. A Radical SAM core domain is found at 143–370 (NYSKPYAYVK…RDSHLEILEE (228 aa)). A TRAM domain is found at 373-437 (ESRIGRTYDA…YEYDMNGTWV (65 aa)).

The protein belongs to the methylthiotransferase family. RimO subfamily. The cofactor is [4Fe-4S] cluster.

It is found in the cytoplasm. It catalyses the reaction L-aspartate(89)-[ribosomal protein uS12]-hydrogen + (sulfur carrier)-SH + AH2 + 2 S-adenosyl-L-methionine = 3-methylsulfanyl-L-aspartate(89)-[ribosomal protein uS12]-hydrogen + (sulfur carrier)-H + 5'-deoxyadenosine + L-methionine + A + S-adenosyl-L-homocysteine + 2 H(+). Its function is as follows. Catalyzes the methylthiolation of an aspartic acid residue of ribosomal protein uS12. This Leptospira interrogans serogroup Icterohaemorrhagiae serovar Lai (strain 56601) protein is Ribosomal protein uS12 methylthiotransferase RimO.